Here is a 282-residue protein sequence, read N- to C-terminus: Biotin synthase (282 aa).

The Radical SAM core domain maps to 1 to 228; the sequence is MQEIFLCSIS…NARLMVAGGR (228 aa). Residues Cys17, Cys21, and Cys24 each contribute to the [4Fe-4S] cluster site. Cys61, Cys96, Cys154, and Arg221 together coordinate [2Fe-2S] cluster.

This sequence belongs to the radical SAM superfamily. Biotin synthase family. In terms of assembly, homodimer. Requires [4Fe-4S] cluster as cofactor. [2Fe-2S] cluster serves as cofactor.

The enzyme catalyses (4R,5S)-dethiobiotin + (sulfur carrier)-SH + 2 reduced [2Fe-2S]-[ferredoxin] + 2 S-adenosyl-L-methionine = (sulfur carrier)-H + biotin + 2 5'-deoxyadenosine + 2 L-methionine + 2 oxidized [2Fe-2S]-[ferredoxin]. It functions in the pathway cofactor biosynthesis; biotin biosynthesis; biotin from 7,8-diaminononanoate: step 2/2. Its function is as follows. Catalyzes the conversion of dethiobiotin (DTB) to biotin by the insertion of a sulfur atom into dethiobiotin via a radical-based mechanism. The polypeptide is Biotin synthase (Helicobacter pylori (strain ATCC 700392 / 26695) (Campylobacter pylori)).